The following is a 400-amino-acid chain: Lysophospholipid transporter LplT (400 aa).

Transmembrane regions (helical) follow at residues 19–39 (VIVA…ATLA), 53–73 (VLQM…GQIA), 91–111 (AGAA…LVGI), 139–159 (MMEA…GVLA), 164–184 (IAAL…NLFI), 195–213 (SWRL…VVLW), 227–247 (LFWG…PVAL), 257–277 (YLNA…AKLV), 281–301 (TVSR…IFSL), 304–324 (ALLP…FFVV), 352–372 (NSAM…GVPA), and 373–393 (VAIG…LWIW).

It belongs to the major facilitator superfamily. LplT (TC 2.A.1.42) family.

It is found in the cell inner membrane. In terms of biological role, catalyzes the facilitated diffusion of 2-acyl-glycero-3-phosphoethanolamine (2-acyl-GPE) into the cell. In Salmonella paratyphi B (strain ATCC BAA-1250 / SPB7), this protein is Lysophospholipid transporter LplT.